Here is a 197-residue protein sequence, read N- to C-terminus: Non-structural protein 5 (197 aa).

Low complexity predominate over residues 17-30 (IFKNESSSTTSTLS). Positions 17–36 (IFKNESSSTTSTLSGKSIGR) are disordered. Residue Asp-92 coordinates Mg(2+).

Belongs to the rotavirus NSP5 family. In terms of assembly, homodimer. Interacts with VP1. Interacts with VP2. Interacts with NSP2; this interaction leads to up-regulation of NSP5 hyperphosphorylation and formation of virus factories. Interacts with NSP6. Participates in the selective exclusion of host proteins from stress granules (SG) and P bodies (PB). Also participates in the sequestration of these remodeled organelles in viral factories. Requires Mg(2+) as cofactor. In terms of processing, O-glycosylated.

It localises to the host cytoplasm. Plays an essential role in the viral genome replication. Participates, together with NSP2, in the formation of viral factories (viroplasms), which are large inclusions in the host cytoplasm where replication intermediates are assembled and viral RNA replication takes place. Orchestrates the recruitment of viroplasmic proteins such as capsid proteins to these factories. Participates in the selective exclusion of host proteins from stress granules (SG) and P bodies (PB). Also participates in the sequestration of these remodeled organelles in viral factories. The chain is Non-structural protein 5 from Homo sapiens (Human).